The chain runs to 441 residues: MFS-type transporter (441 aa).

The disordered stretch occupies residues 1–47 (MPPQQEQDTDSDAIRSYNEESKSETPGCIPDAMLSSDETSNDVASDI). 10 consecutive transmembrane segments (helical) span residues 61–81 (TLCG…FGIF), 95–115 (DISW…AFVG), 125–145 (LVLS…SLST), 150–170 (LILS…TPAV), 183–203 (LAIG…NSMA), 212–232 (FGWT…FVVV), 259–279 (FFTI…YYIA), 289–309 (TLTY…GVFG), 323–343 (LELL…WIAV), and 351–371 (VWTV…PAGI). An N-linked (GlcNAc...) asparagine glycan is attached at asparagine 388. A run of 2 helical transmembrane segments spans residues 389 to 409 (FTVI…IITA) and 415 to 435 (YGAQ…IVAA).

This sequence belongs to the major facilitator superfamily. Monocarboxylate porter (TC 2.A.1.13) family.

The protein localises to the membrane. Its function is as follows. MFS-type transporter; part of the gene cluster that mediates the biosynthesis of butenolide, a mycotoxin that shows antibiotic activity but does not seem to play a major role in the spread of head blight in wheat. The chain is MFS-type transporter from Gibberella zeae (strain ATCC MYA-4620 / CBS 123657 / FGSC 9075 / NRRL 31084 / PH-1) (Wheat head blight fungus).